Here is a 707-residue protein sequence, read N- to C-terminus: Acyl-CoA ligase 891, peroxisomal (707 aa).

259–270 (INYTSGTTGPPK) is a binding site for ATP. Positions 525–549 (DGWFRTGDVCTVDAQGRFIIIDRRK) are fatty acid-binding. A Peroxisome targeting signal motif is present at residues 705–707 (AKL).

This sequence belongs to the ATP-dependent AMP-binding enzyme family.

The protein resides in the peroxisome matrix. The enzyme catalyses (4E,8E)-10-(4-hydroxy-6-methoxy-7-methyl-3-oxo-1,3-dihydro-2-benzofuran-5-yl)-4,8-dimethyldeca-4,8-dienoate + ATP + CoA = (4E,8E)-10-(4-hydroxy-6-methoxy-7-methyl-3-oxo-1,3-dihydro-2-benzofuran-5-yl)-4,8-dimethyldeca-4,8-dienoyl-CoA + AMP + diphosphate. Its pathway is secondary metabolite biosynthesis; terpenoid biosynthesis. Functionally, acyl-CoA ligase involved in the biosynthesis of mycophenolic acid (MPA), the first isolated antibiotic natural product in the world obtained from a culture of Penicillium brevicompactum in 1893. The peroxisomal acyl-CoA ligase 891 converts the intermediate MFDHMP-3C into MFDHMP-3C-CoA which impairs its diffusion from the peroxisome. The first step of the pathway is the synthesis of 5-methylorsellinic acid (5MOA) by the cytosolic polyketide synthase mpaC. 5MOA is then converted to the phthalide compound 5,7-dihydroxy-4,6-dimethylphthalide (DHMP) by the endoplasmic reticulum-bound cytochrome P450 monooxygenase mpaDE. MpaDE first catalyzes hydroxylation of 5-MOA to 4,6-dihydroxy-2-(hydroxymethyl)-3-methylbenzoic acid (DHMB). MpaDE then acts as a lactone synthase that catalyzes the ring closure to convert DHMB into DHMP. The next step is the prenylation of DHMP by the Golgi apparatus-associated prenyltransferase mpaA to yield farnesyl-DHMP (FDHMP). The ER-bound oxygenase mpaB then mediates the oxidative cleavage the C19-C20 double bond in FDHMP to yield FDHMP-3C via a mycophenolic aldehyde intermediate. The O-methyltransferase mpaG catalyzes the methylation of FDHMP-3C to yield MFDHMP-3C. After the cytosolic methylation of FDHMP-3C, MFDHMP-3C enters into peroxisomes probably via free diffusion due to its low molecular weight. Upon a peroxisomal CoA ligation reaction, catalyzed by a beta-oxidation component enzyme acyl-CoA ligase ACL891, MFDHMP-3C-CoA would then be restricted to peroxisomes for the following beta-oxidation pathway steps. The peroxisomal beta-oxidation machinery than converts MFDHMP-3C-CoA into MPA_CoA, via a beta-oxidation chain-shortening process. Finally mpaH acts as a peroxisomal acyl-CoA hydrolase with high substrate specificity toward MPA-CoA to release the final product MPA. This chain is Acyl-CoA ligase 891, peroxisomal, found in Penicillium brevicompactum.